A 310-amino-acid polypeptide reads, in one-letter code: Quinolinate synthase (310 aa).

Positions 27 and 44 each coordinate iminosuccinate. Cys-89 is a binding site for [4Fe-4S] cluster. Iminosuccinate contacts are provided by residues 115–117 (YVN) and Ser-132. Cys-175 serves as a coordination point for [4Fe-4S] cluster. Iminosuccinate contacts are provided by residues 201 to 203 (HPE) and Thr-222. Residue Cys-267 coordinates [4Fe-4S] cluster.

It belongs to the quinolinate synthase family. Type 2 subfamily. It depends on [4Fe-4S] cluster as a cofactor.

The protein localises to the cytoplasm. The enzyme catalyses iminosuccinate + dihydroxyacetone phosphate = quinolinate + phosphate + 2 H2O + H(+). It functions in the pathway cofactor biosynthesis; NAD(+) biosynthesis; quinolinate from iminoaspartate: step 1/1. Its function is as follows. Catalyzes the condensation of iminoaspartate with dihydroxyacetone phosphate to form quinolinate. This Thermus thermophilus (strain ATCC BAA-163 / DSM 7039 / HB27) protein is Quinolinate synthase.